Consider the following 308-residue polypeptide: Mycothiol acetyltransferase (308 aa).

2 consecutive N-acetyltransferase domains span residues 16 to 152 (ETLA…RPLA) and 165 to 308 (VTVR…RTES). Residue E47 coordinates 1D-myo-inositol 2-(L-cysteinylamino)-2-deoxy-alpha-D-glucopyranoside. 91 to 93 (LVV) contacts acetyl-CoA. Residues E192, K231, and E240 each coordinate 1D-myo-inositol 2-(L-cysteinylamino)-2-deoxy-alpha-D-glucopyranoside. Residues 244 to 246 (LGV) and 251 to 257 (QGGGLGK) each bind acetyl-CoA. A 1D-myo-inositol 2-(L-cysteinylamino)-2-deoxy-alpha-D-glucopyranoside-binding site is contributed by Y278.

It belongs to the acetyltransferase family. MshD subfamily. As to quaternary structure, monomer.

The enzyme catalyses 1D-myo-inositol 2-(L-cysteinylamino)-2-deoxy-alpha-D-glucopyranoside + acetyl-CoA = mycothiol + CoA + H(+). Its function is as follows. Catalyzes the transfer of acetyl from acetyl-CoA to desacetylmycothiol (Cys-GlcN-Ins) to form mycothiol. The sequence is that of Mycothiol acetyltransferase from Streptomyces avermitilis (strain ATCC 31267 / DSM 46492 / JCM 5070 / NBRC 14893 / NCIMB 12804 / NRRL 8165 / MA-4680).